Reading from the N-terminus, the 567-residue chain is Oxygen-dependent choline dehydrogenase (567 aa).

FAD is bound at residue 4–33 (DYIIIGAGSAGNVLAARLTEDADVTVLLLE). His-473 (proton acceptor) is an active-site residue.

It belongs to the GMC oxidoreductase family. The cofactor is FAD.

The enzyme catalyses choline + A = betaine aldehyde + AH2. It catalyses the reaction betaine aldehyde + NAD(+) + H2O = glycine betaine + NADH + 2 H(+). The protein operates within amine and polyamine biosynthesis; betaine biosynthesis via choline pathway; betaine aldehyde from choline (cytochrome c reductase route): step 1/1. In terms of biological role, involved in the biosynthesis of the osmoprotectant glycine betaine. Catalyzes the oxidation of choline to betaine aldehyde and betaine aldehyde to glycine betaine at the same rate. The chain is Oxygen-dependent choline dehydrogenase from Yersinia pseudotuberculosis serotype O:1b (strain IP 31758).